The chain runs to 627 residues: Chaperone protein DnaK (627 aa).

A Phosphothreonine; by autocatalysis modification is found at Thr197. Over residues 602–611 the composition is skewed to polar residues; it reads ENQHSEANTV. Residues 602–627 form a disordered region; that stretch reads ENQHSEANTVNDEKVVDADFQDVDKK. The span at 612–627 shows a compositional bias: basic and acidic residues; it reads NDEKVVDADFQDVDKK.

It belongs to the heat shock protein 70 family.

Functionally, acts as a chaperone. The polypeptide is Chaperone protein DnaK (Rickettsia felis (strain ATCC VR-1525 / URRWXCal2) (Rickettsia azadi)).